Here is a 440-residue protein sequence, read N- to C-terminus: UDP-N-acetylmuramoylalanine--D-glutamate ligase (440 aa).

An ATP-binding site is contributed by 113-119 (GTNGKST).

The protein belongs to the MurCDEF family.

The protein resides in the cytoplasm. It carries out the reaction UDP-N-acetyl-alpha-D-muramoyl-L-alanine + D-glutamate + ATP = UDP-N-acetyl-alpha-D-muramoyl-L-alanyl-D-glutamate + ADP + phosphate + H(+). Its pathway is cell wall biogenesis; peptidoglycan biosynthesis. In terms of biological role, cell wall formation. Catalyzes the addition of glutamate to the nucleotide precursor UDP-N-acetylmuramoyl-L-alanine (UMA). This Buchnera aphidicola subsp. Acyrthosiphon pisum (strain Tuc7) protein is UDP-N-acetylmuramoylalanine--D-glutamate ligase.